A 112-amino-acid chain; its full sequence is Transcriptional regulator ClgR (112 aa).

Residues 13-67 (LRGARMSQGRTLREVSDSARVSLGYLSEIERGRKEPSSELLSAICTALQLPLSVV) enclose the HTH cro/C1-type domain. A DNA-binding region (H-T-H motif) is located at residues 24–43 (LREVSDSARVSLGYLSEIER).

Key stress-response regulator that plays an important role in multiple regulatory networks in response to different stress conditions. Required to manage host-derived stress during infection. Plays a role during hypoxia and reaeration. Controls the expression of many genes involved in heat shock, virulence, lipid metabolism, transport or regulation, including clpP1, clpP2, clpC1, hsp, groES, otsA, pknD, prcA and prcB. May function by protecting intracellular redox potential and by inducing the expression of trehalose, a constituent of cell walls that is important for defense against cell-surface and oxidative stress. Also performs different functions during stress response and is important for the pathogenicity of M.tuberculosis in vivo, regardless of the induction of the Clp proteolytic pathway. May directly activate SigE and/or SigH. This Mycobacterium tuberculosis (strain CDC 1551 / Oshkosh) protein is Transcriptional regulator ClgR (clgR).